Reading from the N-terminus, the 294-residue chain is uncharacterized protein (294 aa).

The first 19 residues, M1–A19, serve as a signal peptide directing secretion.

This is an uncharacterized protein from Rickettsia felis (strain ATCC VR-1525 / URRWXCal2) (Rickettsia azadi).